The sequence spans 747 residues: H(+)/Cl(-) exchange transporter 4 (747 aa).

A required for localization in the endoplasmic reticulum region spans residues 1-50; sequence MDFLEEPFPDVGTYEDFHTIDWLREKSRDTDRHRKITSKSKESIWEFIKS. The Cytoplasmic segment spans residues 1 to 54; that stretch reads MDFLEEPFPDVGTYEDFHTIDWLREKSRDTDRHRKITSKSKESIWEFIKSLLDA. Helical transmembrane passes span 55 to 92 and 138 to 161; these read WSGW…VCLS and LNYL…VRVF. Positions 167–171 match the Selectivity filter part_1 motif; sequence GSGIP. Residue serine 168 participates in chloride binding. The helical intramembrane region spans 170 to 177; sequence IPEIKTIL. 2 consecutive transmembrane segments (helical) span residues 187 to 205 and 211 to 230; these read GKWT…VSSG and EGPL…SLFS. The Selectivity filter part_2 signature appears at 209-213; sequence GKEGP. 2 consecutive intramembrane regions (helical) follow at residues 242-254 and 258-266; these read VLSA…VSVA and PIGGVLFSL. The next 5 helical transmembrane spans lie at 278–296, 320–345, 352–372, 429–449, and 454–473; these read LWRS…RSIN, FPFI…AWCR, LGRY…IVAY, MWQL…TFGM, and GLFI…VGIG. A Selectivity filter part_3 motif is present at residues 454–458; that stretch reads GLFIP. Phenylalanine 456 contacts chloride. Intramembrane regions (helical) lie at residues 501–515 and 519–530; these read GLYA…LGGV and TVSLVVIMFELT. The segment at residues 531-534 is an intramembrane region (note=Loop between two helices); that stretch reads GGLE. A helical membrane pass occupies residues 535-553; sequence YIVPLMAAAVTSKWVADAF. Topologically, residues 554-747 are cytoplasmic; sequence GKEGIYEAHI…NQDPESIMFN (194 aa). Chloride is bound at residue tyrosine 559. CBS domains follow at residues 587 to 653 and 680 to 742; these read MRPR…QRQE and LRRI…QDPE. ATP-binding positions include serine 597 and 618-620; that span reads YNG. A required for localization in the endoplasmic reticulum region spans residues 654–683; sequence GIVSNSIMYFTEEPPELPANSPHPLKLRRI. An ATP-binding site is contributed by 725–728; that stretch reads TKKD.

The protein belongs to the chloride channel (TC 2.A.49) family. ClC-4/CLCN4 subfamily. As to expression, predominantly present in excitable tissues such as nervous system and skeletal muscle. Not detected in heart.

The protein localises to the early endosome membrane. The protein resides in the late endosome membrane. Its subcellular location is the endoplasmic reticulum membrane. It is found in the lysosome membrane. It localises to the recycling endosome membrane. Strongly outwardly rectifying, electrogenic H(+)/Cl(-)exchanger which mediates the exchange of chloride ions against protons. The CLC channel family contains both chloride channels and proton-coupled anion transporters that exchange chloride or another anion for protons. The presence of conserved gating glutamate residues is typical for family members that function as antiporters. The sequence is that of H(+)/Cl(-) exchange transporter 4 (Clcn4) from Mus musculus (Mouse).